The chain runs to 507 residues: Beta-glucosidase 12 (507 aa).

The first 22 residues, 1-22 (MRTIYLSLLVFIIVLALNEVMA), serve as a signal peptide directing secretion. Q50 provides a ligand contact to a beta-D-glucoside. An N-linked (GlcNAc...) asparagine glycan is attached at N81. Residues H154 and 199 to 200 (NE) each bind a beta-D-glucoside. The active-site Proton donor is the E200. The cysteines at positions 219 and 227 are disulfide-linked. Residue N226 is glycosylated (N-linked (GlcNAc...) asparagine). Residue Y344 participates in a beta-D-glucoside binding. N-linked (GlcNAc...) asparagine glycosylation is present at N358. Residues E414, W459, 466 to 467 (EW), and F475 contribute to the a beta-D-glucoside site. The Nucleophile role is filled by E414.

This sequence belongs to the glycosyl hydrolase 1 family.

It carries out the reaction Hydrolysis of terminal, non-reducing beta-D-glucosyl residues with release of beta-D-glucose.. The chain is Beta-glucosidase 12 from Arabidopsis thaliana (Mouse-ear cress).